The primary structure comprises 1235 residues: ATP-dependent helicase/nuclease subunit A (1235 aa).

In terms of domain architecture, UvrD-like helicase ATP-binding spans 10–482 (SIWTDDQWSA…IDLNQNFRSR (473 aa)). 31–38 (AAAGSGKT) contributes to the ATP binding site. A UvrD-like helicase C-terminal domain is found at 509–799 (QAALKLGASY…RLMTIHSSKG (291 aa)).

It belongs to the helicase family. AddA subfamily. As to quaternary structure, heterodimer of AddA and AddB/RexB. The cofactor is Mg(2+).

The catalysed reaction is Couples ATP hydrolysis with the unwinding of duplex DNA by translocating in the 3'-5' direction.. It catalyses the reaction ATP + H2O = ADP + phosphate + H(+). In terms of biological role, the heterodimer acts as both an ATP-dependent DNA helicase and an ATP-dependent, dual-direction single-stranded exonuclease. Recognizes the chi site generating a DNA molecule suitable for the initiation of homologous recombination. The AddA nuclease domain is required for chi fragment generation; this subunit has the helicase and 3' -&gt; 5' nuclease activities. The protein is ATP-dependent helicase/nuclease subunit A of Bacillus velezensis (strain DSM 23117 / BGSC 10A6 / LMG 26770 / FZB42) (Bacillus amyloliquefaciens subsp. plantarum).